A 45-amino-acid chain; its full sequence is Pyruvate dehydrogenase E1 component (45 aa).

In terms of assembly, homodimer. Thiamine diphosphate serves as cofactor.

The catalysed reaction is N(6)-[(R)-lipoyl]-L-lysyl-[protein] + pyruvate + H(+) = N(6)-[(R)-S(8)-acetyldihydrolipoyl]-L-lysyl-[protein] + CO2. In terms of biological role, the pyruvate dehydrogenase complex catalyzes the overall conversion of pyruvate to acetyl-CoA and CO(2). It contains multiple copies of three enzymatic components: pyruvate dehydrogenase (E1), dihydrolipoamide acetyltransferase (E2) and lipoamide dehydrogenase (E3). This chain is Pyruvate dehydrogenase E1 component, found in Azotobacter vinelandii.